The sequence spans 186 residues: Cytochrome c oxidase polypeptide 5, mitochondrial (186 aa).

The transit peptide at 1–20 directs the protein to the mitochondrion; that stretch reads MYLSKIICKKVPMKLLCTRN. The Mitochondrial matrix segment spans residues 21 to 107; the sequence is AATVSAAATN…GPRAFSHISQ (87 aa). A helical membrane pass occupies residues 108–128; sequence KTVFWGTVAGLTIGVVLFGLI. Residues 129–186 are Mitochondrial intermembrane-facing; it reads RTQAAPSPRTMTREWQEKSNEYMKENKINPISGEASEGFKGRGQISGGIFSPSEKDKK. The segment at 149 to 186 is disordered; it reads EYMKENKINPISGEASEGFKGRGQISGGIFSPSEKDKK.

This sequence belongs to the cytochrome c oxidase IV family. Component of the cytochrome c oxidase (complex IV, CIV), a multisubunit enzyme composed of a catalytic core of 3 subunits and seevral supernumerary subunits. The complex exists as a monomer or a dimer and forms supercomplexes (SCs) in the inner mitochondrial membrane with ubiquinol-cytochrome c oxidoreductase (cytochrome b-c1 complex, complex III, CIII).

Its subcellular location is the mitochondrion inner membrane. It participates in energy metabolism; oxidative phosphorylation. Functionally, component of the cytochrome c oxidase, the last enzyme in the mitochondrial electron transport chain which drives oxidative phosphorylation. The respiratory chain contains 3 multisubunit complexes succinate dehydrogenase (complex II, CII), ubiquinol-cytochrome c oxidoreductase (cytochrome b-c1 complex, complex III, CIII) and cytochrome c oxidase (complex IV, CIV), that cooperate to transfer electrons derived from NADH and succinate to molecular oxygen, creating an electrochemical gradient over the inner membrane that drives transmembrane transport and the ATP synthase. Cytochrome c oxidase is the component of the respiratory chain that catalyzes the reduction of oxygen to water. Electrons originating from reduced cytochrome c in the intermembrane space (IMS) are transferred via the dinuclear copper A center (CU(A)) of subunit 2 and heme A of subunit 1 to the active site in subunit 1, a binuclear center (BNC) formed by heme A3 and copper B (CU(B)). The BNC reduces molecular oxygen to 2 water molecules using 4 electrons from cytochrome c in the IMS and 4 protons from the mitochondrial matrix. The protein is Cytochrome c oxidase polypeptide 5, mitochondrial (cox5) of Schizosaccharomyces pombe (strain 972 / ATCC 24843) (Fission yeast).